Reading from the N-terminus, the 69-residue chain is Putative membrane protein insertion efficiency factor (69 aa).

Belongs to the UPF0161 family.

It localises to the cell inner membrane. Could be involved in insertion of integral membrane proteins into the membrane. In Aromatoleum aromaticum (strain DSM 19018 / LMG 30748 / EbN1) (Azoarcus sp. (strain EbN1)), this protein is Putative membrane protein insertion efficiency factor.